Here is a 426-residue protein sequence, read N- to C-terminus: Enolase (426 aa).

Gln-165 lines the (2R)-2-phosphoglycerate pocket. Glu-207 (proton donor) is an active-site residue. 3 residues coordinate Mg(2+): Asp-244, Glu-285, and Asp-312. Residues Lys-337, Arg-366, Ser-367, and Lys-388 each contribute to the (2R)-2-phosphoglycerate site. Residue Lys-337 is the Proton acceptor of the active site.

It belongs to the enolase family. Mg(2+) serves as cofactor.

It is found in the cytoplasm. Its subcellular location is the secreted. It localises to the cell surface. The catalysed reaction is (2R)-2-phosphoglycerate = phosphoenolpyruvate + H2O. It participates in carbohydrate degradation; glycolysis; pyruvate from D-glyceraldehyde 3-phosphate: step 4/5. Catalyzes the reversible conversion of 2-phosphoglycerate (2-PG) into phosphoenolpyruvate (PEP). It is essential for the degradation of carbohydrates via glycolysis. The sequence is that of Enolase from Thermosynechococcus vestitus (strain NIES-2133 / IAM M-273 / BP-1).